Consider the following 518-residue polypeptide: MFSLQDLCRKNIFFLPNDFSKHTLQWLGLYWKEHGSVHRAEKDSIMIQNELVLSINDALLLAGEEGDTDVVQLLLLWEGNLHYAIIGALKTEKYSLVCEYHSQIQDWHVLLPLIQDPETFEKCHDLSLECDFICLLQHAVKCDMLSILVKYKEDLLNVRIRHRIQSLFVLACENRRFEIIEWIGQNLPIPEPEAIFSIAIVTKDIELFSLGYKLIFDYMQRQGTFQLTNMVRMLLLNRYIGMAIEKGLLPFIVETLKYGGSVNRALSYAVIDNKRKIIDYLVRHENIPRGTIERLLHLAVKKQSSRKTLNLLLSYINYKVKNVKKLVEHVVDHNSTLVLKILLEKKENLVDAVLTRLVKHSTYFRVREFIQEFSISPEKFIKIAVREQKNVLIEAISEDIWENPTERITYLKQIVHTIKYESGRRFLIDIIHSIYQSYSLKHEDILKLAIFYVKYNAITHFKDLCKYLWLNRGTESKKLFLECLEIADEKEFPDIKSIVSEYINYLFTAGAITKEEII.

ANK repeat units lie at residues 54–83 (SIND…NLHY), 129–158 (ECDF…LLNV), 261–290 (SVNR…IPRG), 292–322 (IERL…KVKN), and 324–351 (KKLV…NLVD).

It belongs to the asfivirus MGF 505 family.

In terms of biological role, plays a role in virus cell tropism, and may be required for efficient virus replication in macrophages. In Ornithodoros (relapsing fever ticks), this protein is Protein MGF 505-6R.